A 201-amino-acid chain; its full sequence is LexA repressor (201 aa).

Positions 28–48 form a DNA-binding region, H-T-H motif; it reads MRDIAAHLRISGTLGVSKHLT. Catalysis depends on for autocatalytic cleavage activity residues Ser120 and Lys157.

The protein belongs to the peptidase S24 family. As to quaternary structure, homodimer.

It carries out the reaction Hydrolysis of Ala-|-Gly bond in repressor LexA.. Functionally, represses a number of genes involved in the response to DNA damage (SOS response), including recA and lexA. In the presence of single-stranded DNA, RecA interacts with LexA causing an autocatalytic cleavage which disrupts the DNA-binding part of LexA, leading to derepression of the SOS regulon and eventually DNA repair. The polypeptide is LexA repressor (Geobacter metallireducens (strain ATCC 53774 / DSM 7210 / GS-15)).